Reading from the N-terminus, the 74-residue chain is uncharacterized protein (74 aa).

The dksA C4-type zinc-finger motif lies at 35 to 59 (CEECDAPIPAARRAAYPSATRCVSC).

This is an uncharacterized protein from Enterobacteriaceae (Bacteriophage P2).